The primary structure comprises 425 residues: Serine--tRNA ligase (425 aa).

233 to 235 serves as a coordination point for L-serine; that stretch reads TAE. 264-266 provides a ligand contact to ATP; that stretch reads RRE. Glutamate 287 contributes to the L-serine binding site. An ATP-binding site is contributed by 351–354; the sequence is EISS. Serine 385 is an L-serine binding site.

This sequence belongs to the class-II aminoacyl-tRNA synthetase family. Type-1 seryl-tRNA synthetase subfamily. As to quaternary structure, homodimer. The tRNA molecule binds across the dimer.

Its subcellular location is the cytoplasm. It carries out the reaction tRNA(Ser) + L-serine + ATP = L-seryl-tRNA(Ser) + AMP + diphosphate + H(+). The catalysed reaction is tRNA(Sec) + L-serine + ATP = L-seryl-tRNA(Sec) + AMP + diphosphate + H(+). It functions in the pathway aminoacyl-tRNA biosynthesis; selenocysteinyl-tRNA(Sec) biosynthesis; L-seryl-tRNA(Sec) from L-serine and tRNA(Sec): step 1/1. Functionally, catalyzes the attachment of serine to tRNA(Ser). Is also able to aminoacylate tRNA(Sec) with serine, to form the misacylated tRNA L-seryl-tRNA(Sec), which will be further converted into selenocysteinyl-tRNA(Sec). The sequence is that of Serine--tRNA ligase from Prochlorococcus marinus (strain MIT 9515).